A 2131-amino-acid polypeptide reads, in one-letter code: Sodium channel protein para (2131 aa).

Residues 1–148 (MTEDSDSISE…FNPIRRVAIY (148 aa)) are Cytoplasmic-facing. A compositionally biased stretch (basic and acidic residues) spans 35 to 48 (HEKQKELERKRAEG). Residues 35-84 (HEKQKELERKRAEGEVPQYGRKKKQKEIRYDDEDEDEGPQPDPTLEQGVP) form a disordered region. Residues 64–73 (YDDEDEDEGP) are compositionally biased toward acidic residues. The I repeat unit spans residues 134–467 (WMLDPFNPIR…AAKAAKLEER (334 aa)). Residues 149-172 (ILVHPLFSLFIITTILVNCILMIM) form a helical membrane-spanning segment. The Extracellular portion of the chain corresponds to 173-180 (PTTPTVES). Residues 181 to 199 (TEVIFTGIYTFESAVKVMA) form a helical membrane-spanning segment. Residues 200-212 (RGFILCPFTYLRD) lie on the Cytoplasmic side of the membrane. The helical transmembrane segment at 213-231 (AWNWLDFVVIALAYVTMGI) threads the bilayer. At 232–237 (DLGNLA) the chain is on the extracellular side. A helical; Voltage-sensor membrane pass occupies residues 238-257 (ALRTFRVLRALKTVAIVPGL). The Cytoplasmic segment spans residues 258–273 (KTIVGAVIESVKNLRD). A helical transmembrane segment spans residues 274 to 297 (VIILTMFSLSVFALMGLQIYMGVL). Residues 298–373 (TQKCIKKFPL…PNYGYTSFDS (76 aa)) are Extracellular-facing. The cysteines at positions 301 and 350 are disulfide-linked. 3 N-linked (GlcNAc...) asparagine glycosylation sites follow: asparagine 313, asparagine 325, and asparagine 343. Residues 374–398 (FGWAFLSAFRLMTQDFWEDLYQLVL) constitute an intramembrane region (pore-forming). Residues 399–405 (RAAGPWH) are Extracellular-facing. Residues 406 to 427 (MLFFIVIIFLGSFYLVNLILAI) traverse the membrane as a helical segment. At 428–812 (VAMSYDELQK…VWLKFQEWVS (385 aa)) the chain is on the cytoplasmic side. Residues serine 553 and serine 570 each carry the phosphoserine; by PKA modification. Disordered stretches follow at residues 553–572 (STTS…GSRS) and 671–691 (KESK…TNGG). A compositionally biased stretch (polar residues) spans 680 to 691 (TRNQSVGATNGG). Residues 799-1069 (DCCWVWLKFQ…IAEAFNRIGR (271 aa)) form an II repeat. A helical membrane pass occupies residues 813–837 (LIVFDPFVELFITLCIVVNTMFMAM). Over 838-848 (DHHDMNKEMER) the chain is Extracellular. The chain crosses the membrane as a helical span at residues 849 to 873 (VLKSGNYFFTATFAIEATMKLMAMS). Topologically, residues 874 to 880 (PKYYFQE) are cytoplasmic. The chain crosses the membrane as a helical span at residues 881–900 (GWNIFDFIIVALSLLELGLE). The Extracellular segment spans residues 901–906 (GVQGLS). Residues 907-926 (VLRSFRLLRVFKLAKSWPTL) form a helical; Voltage-sensor membrane-spanning segment. The Cytoplasmic segment spans residues 927–941 (NLLISIMGRTMGALG). The helical transmembrane segment at 942–963 (NLTFVLCIIIFIFAVMGMQLFG) threads the bilayer. At 964–985 (KNYHDHKDRFPDGDLPRWNFTD) the chain is on the extracellular side. Asparagine 982 is a glycosylation site (N-linked (GlcNAc...) asparagine). The pore-forming intramembrane region spans 986–1006 (FMHSFMIVFRVLCGEWIESMW). At 1007–1013 (DCMYVGD) the chain is on the extracellular side. Cysteine 1008 and cysteine 1016 are oxidised to a cystine. The chain crosses the membrane as a helical span at residues 1014 to 1041 (VSCIPFFLATVVIGNLVVLNLFLALLLS). Topologically, residues 1042-1296 (NFGSSSLSAP…WGNLRLKTFQ (255 aa)) are cytoplasmic. Residues 1166-1240 (DMKNNKPKKS…LDEEGECEEG (75 aa)) form a disordered region. Positions 1177–1194 (YLNNATDDDTASINSYGS) are enriched in polar residues. Positions 1199 to 1225 (PFKDESHKGSAETMEGEEKRDASKEDL) are enriched in basic and acidic residues. A compositionally biased stretch (acidic residues) spans 1226 to 1240 (GLDEELDEEGECEEG). An III repeat occupies 1284–1591 (WQGWGNLRLK…QKKYYNAMKK (308 aa)). Residues 1297–1320 (LIENKYFETAVITMILMSSLALAL) traverse the membrane as a helical segment. At 1321–1334 (EDVHLPQRPILQDI) the chain is on the extracellular side. The helical transmembrane segment at 1335–1359 (LYYMDRIFTVIFFLEMLIKWLALGF) threads the bilayer. Topologically, residues 1360–1365 (KVYFTN) are cytoplasmic. A helical membrane pass occupies residues 1366–1387 (AWCWLDFVIVMVSLINFVASLV). The Extracellular portion of the chain corresponds to 1388–1391 (GAGG). A helical; Voltage-sensor transmembrane segment spans residues 1392–1413 (IQAFKTMRTLRALRPLRAMSRM). Residues 1414-1432 (QGMRVVVNALVQAIPSIFN) are Cytoplasmic-facing. The chain crosses the membrane as a helical span at residues 1433-1454 (VLLVCLIFWLIFAIMGVQLFAG). At 1455–1495 (KYFKCEDMNGTKLSHEIIPNRNACESENYTWVNSAMNFDHV) the chain is on the extracellular side. N-linked (GlcNAc...) asparagine glycans are attached at residues asparagine 1463 and asparagine 1482. Positions 1496–1517 (GNAYLCLFQVATFKGWIQIMND) form an intramembrane region, pore-forming. Residues 1518–1533 (AIDSREVDKQPIRETN) lie on the Extracellular side of the membrane. The chain crosses the membrane as a helical span at residues 1534-1560 (IYMYLYFVFFIIFGSFFTLNLFIGVII). The Cytoplasmic portion of the chain corresponds to 1561–1614 (DNFNEQKKKAGGSLEMFMTEDQKKYYNAMKKMGSKKPLKAIPRPRWRPQAIVFE). The IV repeat unit spans residues 1601–1862 (IPRPRWRPQA…NMYIAVILEN (262 aa)). A helical transmembrane segment spans residues 1615–1638 (IVTDKKFDIIIMLFIGLNMFTMTL). The Extracellular segment spans residues 1639–1649 (DRYDASDTYNA). The helical transmembrane segment at 1650–1673 (VLDYLNAIFVVIFSSECLLKIFAL) threads the bilayer. The Cytoplasmic segment spans residues 1674–1679 (RYHYFI). Residues 1680–1703 (EPWNLFDVVVVILSILGLVLSDII) traverse the membrane as a helical segment. Topologically, residues 1704–1713 (EKYFVSPTLL) are extracellular. A helical; Voltage-sensor membrane pass occupies residues 1714–1735 (RVVRVAKVGRVLRLVKGAKGIR). Residues 1736–1750 (TLLFALAMSLPALFN) are Cytoplasmic-facing. Residues 1751-1773 (ICLLLFLVMFIFAIFGMSFFMHV) traverse the membrane as a helical segment. Residues 1774–1787 (KEKSGINDVYNFKT) are Extracellular-facing. The pore-forming intramembrane region spans 1788-1810 (FGQSMILLFQMSTSAGWDGVLDA). Over 1811 to 1835 (IINEEACDPPDNDKGYPGNCGSATV) the chain is Extracellular. Residues 1836–1860 (GITFLLSYLVISFLIVINMYIAVIL) traverse the membrane as a helical segment. Over 1861–2131 (ENYSQATEDV…PSITSRTADV (271 aa)) the chain is Cytoplasmic. The EF-hand domain occupies 1877 to 1912 (DDYDMYYEIWQQFDPEGTQYIRYDQLSEFLDVLEPP). A disordered region spans residues 2001-2096 (HKARGEGGGS…GSPGAGSAGR (96 aa)). Positions 2021–2035 (GDPDAGDPAPDEATD) are enriched in acidic residues. A compositionally biased stretch (low complexity) spans 2068–2088 (AAAAAAAAAAAAAAGTTTAGS).

Belongs to the sodium channel (TC 1.A.1.10) family. Para subfamily.

It localises to the cell membrane. Mediates the voltage-dependent sodium ion permeability of excitable membranes. Assuming opened or closed conformations in response to the voltage difference across the membrane, the protein forms a sodium-selective channel through which Na(+) ions may pass in accordance with their electrochemical gradient. The chain is Sodium channel protein para (para) from Drosophila melanogaster (Fruit fly).